A 599-amino-acid chain; its full sequence is Elongation factor 4 (599 aa).

A tr-type G domain is found at 4–186 (KFIRNFSIIA…AIIKHVPPPL (183 aa)). GTP-binding positions include 16-21 (DHGKST) and 133-136 (NKID).

Belongs to the TRAFAC class translation factor GTPase superfamily. Classic translation factor GTPase family. LepA subfamily.

The protein resides in the cell membrane. The catalysed reaction is GTP + H2O = GDP + phosphate + H(+). Required for accurate and efficient protein synthesis under certain stress conditions. May act as a fidelity factor of the translation reaction, by catalyzing a one-codon backward translocation of tRNAs on improperly translocated ribosomes. Back-translocation proceeds from a post-translocation (POST) complex to a pre-translocation (PRE) complex, thus giving elongation factor G a second chance to translocate the tRNAs correctly. Binds to ribosomes in a GTP-dependent manner. The protein is Elongation factor 4 of Ureaplasma urealyticum serovar 10 (strain ATCC 33699 / Western).